The primary structure comprises 494 residues: MWSLDPSQKEVLRFAVSCRILTLMLQALFNIIIPDHHADAFSPPRLASSCSVDQLVEGLLGGLSRWDAEHFLFIAEHGYLYEHNFAFFPGFPLALLMGTELLRPLQGLLSQRSCLLVSVALLNFLFSVLAAVTLHDLGCLVLGCPRQAFYAAMLFCLSPANVFLAAGYSEALFAFLTFSAMGQLERGRSWASGLLFALATGVRSNGLVSVGFLLHAQCRGFFSSLVVLNPLKPLFKLMASLCLSVLTVSLPFALFQYYAYTQFCLPGSAHSVPEPLVQLAVDKGYRITGGNEPPWCSWGLPLVYSYIQDVYWNVGFLRYYELRQVPNFLLATPVAVLVVWAAWTYVTTHPWLCLTLGLRRSKDSKKTLEKPHPGFLSPKVFVYLVHAAGLLLFGSLCMHVQVLTRLLCSSTPVVYWFPAHLLQNQEPLLRSVDTVPEKLLEKNSPPGQKAPRNCIMKLLYNWRACSPVTRCILGYFLTYWLLGLLLHCNFLPWT.

Topologically, residues 1-13 are cytoplasmic; the sequence is MWSLDPSQKEVLR. A helical membrane pass occupies residues 14–34; it reads FAVSCRILTLMLQALFNIIIP. At 35–77 the chain is on the lumenal side; that stretch reads DHHADAFSPPRLASSCSVDQLVEGLLGGLSRWDAEHFLFIAEH. The helical transmembrane segment at 78–98 threads the bilayer; sequence GYLYEHNFAFFPGFPLALLMG. At 99-113 the chain is on the cytoplasmic side; sequence TELLRPLQGLLSQRS. Residues 114–134 traverse the membrane as a helical segment; sequence CLLVSVALLNFLFSVLAAVTL. The Lumenal segment spans residues 135-136; that stretch reads HD. A helical membrane pass occupies residues 137–157; it reads LGCLVLGCPRQAFYAAMLFCL. Over 158-161 the chain is Cytoplasmic; that stretch reads SPAN. The helical transmembrane segment at 162–182 threads the bilayer; sequence VFLAAGYSEALFAFLTFSAMG. The Lumenal segment spans residues 183 to 192; that stretch reads QLERGRSWAS. The helical transmembrane segment at 193–213 threads the bilayer; that stretch reads GLLFALATGVRSNGLVSVGFL. Topologically, residues 214-234 are cytoplasmic; the sequence is LHAQCRGFFSSLVVLNPLKPL. A helical membrane pass occupies residues 235 to 255; the sequence is FKLMASLCLSVLTVSLPFALF. Topologically, residues 256-327 are lumenal; the sequence is QYYAYTQFCL…RYYELRQVPN (72 aa). The helical transmembrane segment at 328–348 threads the bilayer; it reads FLLATPVAVLVVWAAWTYVTT. Residues 349 to 379 lie on the Cytoplasmic side of the membrane; it reads HPWLCLTLGLRRSKDSKKTLEKPHPGFLSPK. The helical transmembrane segment at 380 to 400 threads the bilayer; the sequence is VFVYLVHAAGLLLFGSLCMHV. Residues 401-470 are Lumenal-facing; it reads QVLTRLLCSS…NWRACSPVTR (70 aa). A helical membrane pass occupies residues 471 to 491; it reads CILGYFLTYWLLGLLLHCNFL. The Cytoplasmic segment spans residues 492-494; it reads PWT.

It belongs to the PIGV family. In terms of processing, not N-glycosylated.

It is found in the endoplasmic reticulum membrane. The protein operates within glycolipid biosynthesis; glycosylphosphatidylinositol-anchor biosynthesis. Functionally, alpha-1,6-mannosyltransferase that catalyzes the transfer of the second mannose, via an alpha-1,6 bond, from a dolichol-phosphate-mannose (Dol-P-Man) to the alpha-D-Man-(1-&gt;4)-alpha-D-GlcN-(1-&gt;6)-(1-radyl,2-acyl-sn-glycero-3-phospho)-2-acyl-inositol intermediate to generate an alpha-D-Man-(1-&gt;6)-alpha-D-Man-(1-&gt;4)-alpha-D-GlcN-(1-&gt;6)-(1-radyl,2-acyl-sn-glycero-3-phospho)-2-acyl-inositol and participates in the seventh step of the glycosylphosphatidylinositol-anchor biosynthesis. Also transfers the second mannose on a 2-PEtn-alpha-D-Man-(1-&gt;4)-alpha-D-GlcN-(1-&gt;6)-(1-radyl,2-acyl-sn-glycero-3-phospho)-2-acyl-inositol. This chain is GPI alpha-1,6-mannosyltransferase 2, found in Cricetulus griseus (Chinese hamster).